The following is a 308-amino-acid chain: Ribosomal RNA small subunit methyltransferase H (308 aa).

Residues 32–34 (GGH), Asp-52, Phe-78, Asp-100, and Gln-107 contribute to the S-adenosyl-L-methionine site.

This sequence belongs to the methyltransferase superfamily. RsmH family.

The protein localises to the cytoplasm. It catalyses the reaction cytidine(1402) in 16S rRNA + S-adenosyl-L-methionine = N(4)-methylcytidine(1402) in 16S rRNA + S-adenosyl-L-homocysteine + H(+). In terms of biological role, specifically methylates the N4 position of cytidine in position 1402 (C1402) of 16S rRNA. This Legionella pneumophila (strain Paris) protein is Ribosomal RNA small subunit methyltransferase H.